The following is a 67-amino-acid chain: Beta-defensin 103A (67 aa).

The signal sequence occupies residues 1 to 22 (MRIHYLLFALLFLFLVPVPGHG). 3 disulfide bridges follow: Cys33–Cys62, Cys40–Cys55, and Cys45–Cys63.

It belongs to the beta-defensin family.

The protein resides in the secreted. Its function is as follows. Exhibits antimicrobial activity against Gram-positive and Gram-negative bacteria. This is Beta-defensin 103A (DEFB103A) from Pan troglodytes (Chimpanzee).